We begin with the raw amino-acid sequence, 266 residues long: Dihydropteroate synthase (266 aa).

The Pterin-binding domain occupies 12 to 260 (AAIMGILNVT…DVKANQEIVA (249 aa)). Residue Asn-19 participates in Mg(2+) binding. Residues Thr-59, Asp-93, Asn-112, Asp-176, Lys-212, and 248–250 (RVH) each bind (7,8-dihydropterin-6-yl)methyl diphosphate.

The protein belongs to the DHPS family. Homodimer or homotrimer. Mg(2+) serves as cofactor.

The catalysed reaction is (7,8-dihydropterin-6-yl)methyl diphosphate + 4-aminobenzoate = 7,8-dihydropteroate + diphosphate. It functions in the pathway cofactor biosynthesis; tetrahydrofolate biosynthesis; 7,8-dihydrofolate from 2-amino-4-hydroxy-6-hydroxymethyl-7,8-dihydropteridine diphosphate and 4-aminobenzoate: step 1/2. In terms of biological role, catalyzes the condensation of para-aminobenzoate (pABA) with 6-hydroxymethyl-7,8-dihydropterin diphosphate (DHPt-PP) to form 7,8-dihydropteroate (H2Pte), the immediate precursor of folate derivatives. The protein is Dihydropteroate synthase (folP) of Streptococcus pyogenes.